Consider the following 437-residue polypeptide: Four-jointed box protein 1 (437 aa).

An N-terminal signal peptide occupies residues 1-24 (MGRRMRGAAATAGLWLLALGSLLA). Disordered regions lie at residues 33–66 (RTEL…PLPP) and 88–116 (AGAD…EESA). Pro residues predominate over residues 57 to 66 (APAPRFPLPP). N248 carries N-linked (GlcNAc...) asparagine glycosylation.

It belongs to the FJX1/FJ family. Post-translationally, glycosylated. Undergoes proteolytic cleavage.

It localises to the secreted. Its function is as follows. Acts as an inhibitor of dendrite extension and branching. The protein is Four-jointed box protein 1 (FJX1) of Homo sapiens (Human).